We begin with the raw amino-acid sequence, 458 residues long: ATP synthase subunit beta (458 aa).

An ATP-binding site is contributed by 148-155 (GGAGVGKT).

The protein belongs to the ATPase alpha/beta chains family. F-type ATPases have 2 components, CF(1) - the catalytic core - and CF(0) - the membrane proton channel. CF(1) has five subunits: alpha(3), beta(3), gamma(1), delta(1), epsilon(1). CF(0) has three main subunits: a(1), b(2) and c(9-12). The alpha and beta chains form an alternating ring which encloses part of the gamma chain. CF(1) is attached to CF(0) by a central stalk formed by the gamma and epsilon chains, while a peripheral stalk is formed by the delta and b chains.

Its subcellular location is the cell inner membrane. The enzyme catalyses ATP + H2O + 4 H(+)(in) = ADP + phosphate + 5 H(+)(out). In terms of biological role, produces ATP from ADP in the presence of a proton gradient across the membrane. The catalytic sites are hosted primarily by the beta subunits. The polypeptide is ATP synthase subunit beta (Mannheimia succiniciproducens (strain KCTC 0769BP / MBEL55E)).